A 33-amino-acid chain; its full sequence is Brevinin-2DYd (33 aa).

An intrachain disulfide couples cysteine 27 to cysteine 33.

As to expression, expressed by the skin glands.

It is found in the secreted. Functionally, antimicrobial peptide. A mixture of Brevinin-2DYc/2DYd is active against the Gram-positive bacterium S.aureus (MIC=15 uM) and the Gram-negative bacterium E.coli (MIC=15 uM). This Rana dybowskii (Dybovsky's frog) protein is Brevinin-2DYd.